The sequence spans 348 residues: Mannonate dehydratase (348 aa).

Belongs to the mannonate dehydratase family. Requires Fe(2+) as cofactor. It depends on Mn(2+) as a cofactor.

The enzyme catalyses D-mannonate = 2-dehydro-3-deoxy-D-gluconate + H2O. The protein operates within carbohydrate metabolism; pentose and glucuronate interconversion. Its function is as follows. Catalyzes the dehydration of D-mannonate. In Streptococcus agalactiae serotype III (strain NEM316), this protein is Mannonate dehydratase.